The primary structure comprises 172 residues: Adenylate kinase isoenzyme 6 (172 aa).

ATP-binding residues include glycine 13, glycine 15, lysine 16, threonine 17, and threonine 18. Residues 33–56 (NVGDLAREGHLYDGYDEEYGCPIL) form an NMPbind region. The interval 108–118 (TRGYHEKKLQD) is LID. ATP is bound at residue arginine 109.

Belongs to the adenylate kinase family. AK6 subfamily. In terms of assembly, monomer and homodimer. Interacts with small ribosomal subunit protein uS11. Not a structural component of 43S pre-ribosomes, but transiently interacts with them by binding to uS11. Interacts with COIL (via C-terminus).

The protein localises to the cytoplasm. The protein resides in the nucleus. It localises to the nucleoplasm. Its subcellular location is the cajal body. The enzyme catalyses AMP + ATP = 2 ADP. It carries out the reaction ATP + H2O = ADP + phosphate + H(+). Functionally, broad-specificity nucleoside monophosphate (NMP) kinase that catalyzes the reversible transfer of the terminal phosphate group between nucleoside triphosphates and monophosphates. Also has ATPase activity. Involved in the late cytoplasmic maturation steps of the 40S ribosomal particles, specifically 18S rRNA maturation. While NMP activity is not required for ribosome maturation, ATPase activity is. Associates transiently with small ribosomal subunit protein uS11. ATP hydrolysis breaks the interaction with uS11. May temporarily remove uS11 from the ribosome to enable a conformational change of the ribosomal RNA that is needed for the final maturation step of the small ribosomal subunit. Its NMP activity may have a role in nuclear energy homeostasis. May be involved in regulation of Cajal body (CB) formation. This is Adenylate kinase isoenzyme 6 from Rattus norvegicus (Rat).